Here is a 277-residue protein sequence, read N- to C-terminus: Diaminopimelate epimerase (277 aa).

Positions 11 and 62 each coordinate substrate. Cys-71 acts as the Proton donor in catalysis. Substrate-binding positions include 72 to 73, Asn-160, Asn-193, and 211 to 212; these read GN and ER. Residue Cys-220 is the Proton acceptor of the active site. 221–222 contacts substrate; the sequence is GT.

This sequence belongs to the diaminopimelate epimerase family. In terms of assembly, homodimer.

The protein resides in the cytoplasm. It carries out the reaction (2S,6S)-2,6-diaminopimelate = meso-2,6-diaminopimelate. It functions in the pathway amino-acid biosynthesis; L-lysine biosynthesis via DAP pathway; DL-2,6-diaminopimelate from LL-2,6-diaminopimelate: step 1/1. Catalyzes the stereoinversion of LL-2,6-diaminopimelate (L,L-DAP) to meso-diaminopimelate (meso-DAP), a precursor of L-lysine. The chain is Diaminopimelate epimerase from Methanococcus maripaludis (strain DSM 14266 / JCM 13030 / NBRC 101832 / S2 / LL).